The chain runs to 580 residues: E3 ubiquitin-protein ligase TRIM45 (580 aa).

The RING-type zinc-finger motif lies at 29–98 (CPLCLGLFKA…QIGILCPVCD (70 aa)). B box-type zinc fingers lie at residues 130–176 (GQGL…MVDL) and 186–227 (GKPI…CDFT). Cysteine 135, cysteine 138, cysteine 158, histidine 162, cysteine 191, histidine 194, cysteine 214, and histidine 219 together coordinate Zn(2+). Residues 281–335 (SEGYIKAIEEHRDKLLKQLEDIRAQKENSLQLQKAQLEQLLADMRTGVEFTEHLL) adopt a coiled-coil conformation. One copy of the Filamin repeat lies at 394-497 (TKEVDPAKCV…VQGSPFTVMV (104 aa)).

Belongs to the TRIM/RBCC family. As to expression, expressed in skeletal muscle, brain, heart and pancreas.

The protein localises to the cytoplasm. Its subcellular location is the nucleus. The catalysed reaction is S-ubiquitinyl-[E2 ubiquitin-conjugating enzyme]-L-cysteine + [acceptor protein]-L-lysine = [E2 ubiquitin-conjugating enzyme]-L-cysteine + N(6)-ubiquitinyl-[acceptor protein]-L-lysine.. In terms of biological role, E3 ubiquitin-protein ligase that plays a role in the regulation of inflammatory response. Mechanistically, mediates the 'Lys-48'-linked polyubiquitination of TAB2, a regulatory protein of the kinase TAK1, leading to its degradation via the proteasomal pathway and inhibition of the TLR-mediated inflammatory immune response. May act as a transcriptional repressor in mitogen-activated protein kinase signaling pathway. The chain is E3 ubiquitin-protein ligase TRIM45 (TRIM45) from Homo sapiens (Human).